A 74-amino-acid polypeptide reads, in one-letter code: Kappa-scoloptoxin(07)-Ssm2e (74 aa).

A signal peptide spans methionine 1–glycine 19. The propeptide occupies alanine 20–asparagine 41.

This sequence belongs to the scoloptoxin-07 family. Contains 3 disulfide bonds. Expressed by the venom gland.

The protein localises to the secreted. Inhibits voltage-gated potassium channels. This chain is Kappa-scoloptoxin(07)-Ssm2e, found in Scolopendra mutilans (Chinese red-headed centipede).